A 1420-amino-acid polypeptide reads, in one-letter code: Protein CFT1 (1420 aa).

Residues 161-182 show a composition bias toward acidic residues; that stretch reads DEDEEEEEEEDEEDEDEGEENI. Disordered stretches follow at residues 161 to 210, 435 to 488, and 722 to 760; these read DEDE…TTNQ, QVRY…QKTI, and NTSS…PPPK. Basic and acidic residues-rich tracts occupy residues 183–204 and 437–461; these read DDTK…EDKN and RYRD…KEDN. Positions 462-483 are enriched in acidic residues; that stretch reads KDDDDNDDDDEDDLYKEEEEEE.

Belongs to the CFT1 family.

Its subcellular location is the nucleus. Its function is as follows. RNA-binding component of the cleavage and polyadenylation factor (CPF) complex, which plays a key role in polyadenylation-dependent pre-mRNA 3'-end formation and cooperates with cleavage factors including the CFIA complex and NAB4/CFIB. Involved in poly(A) site recognition. May be involved in coupling transcription termination and mRNA 3'-end formation. This is Protein CFT1 (CFT1) from Candida albicans (strain SC5314 / ATCC MYA-2876) (Yeast).